The following is a 284-amino-acid chain: Pantothenate synthetase (284 aa).

30–37 (MGALHDGH) is a binding site for ATP. The active-site Proton donor is His37. Gln61 provides a ligand contact to (R)-pantoate. Position 61 (Gln61) interacts with beta-alanine. 147–150 (GEKD) is an ATP binding site. Gln153 serves as a coordination point for (R)-pantoate. Residues Val176 and 184 to 187 (KSSR) each bind ATP.

Belongs to the pantothenate synthetase family. As to quaternary structure, homodimer.

The protein resides in the cytoplasm. It carries out the reaction (R)-pantoate + beta-alanine + ATP = (R)-pantothenate + AMP + diphosphate + H(+). It participates in cofactor biosynthesis; (R)-pantothenate biosynthesis; (R)-pantothenate from (R)-pantoate and beta-alanine: step 1/1. Its function is as follows. Catalyzes the condensation of pantoate with beta-alanine in an ATP-dependent reaction via a pantoyl-adenylate intermediate. In Chloroherpeton thalassium (strain ATCC 35110 / GB-78), this protein is Pantothenate synthetase.